We begin with the raw amino-acid sequence, 607 residues long: V-type proton ATPase catalytic subunit A (607 aa).

Position 246 to 253 (246 to 253 (GAFGCGKT)) interacts with ATP.

This sequence belongs to the ATPase alpha/beta chains family. V-ATPase is a heteromultimeric enzyme composed of a peripheral catalytic V1 complex (components A to H) attached to an integral membrane V0 proton pore complex (components: a, c, c', c'', d, e, f and VOA1).

It localises to the vacuole membrane. It carries out the reaction ATP + H2O + 4 H(+)(in) = ADP + phosphate + 5 H(+)(out). Catalytic subunit of the V1 complex of vacuolar(H+)-ATPase (V-ATPase), a multisubunit enzyme composed of a peripheral complex (V1) that hydrolyzes ATP and a membrane integral complex (V0) that translocates protons. V-ATPase is responsible for acidifying and maintaining the pH of intracellular compartments. This Neurospora crassa (strain ATCC 24698 / 74-OR23-1A / CBS 708.71 / DSM 1257 / FGSC 987) protein is V-type proton ATPase catalytic subunit A (vma-1).